The chain runs to 223 residues: Urease accessory protein UreF (223 aa).

The protein belongs to the UreF family. As to quaternary structure, ureD, UreF and UreG form a complex that acts as a GTP-hydrolysis-dependent molecular chaperone, activating the urease apoprotein by helping to assemble the nickel containing metallocenter of UreC. The UreE protein probably delivers the nickel.

It is found in the cytoplasm. Required for maturation of urease via the functional incorporation of the urease nickel metallocenter. The chain is Urease accessory protein UreF from Agrobacterium fabrum (strain C58 / ATCC 33970) (Agrobacterium tumefaciens (strain C58)).